Here is a 401-residue protein sequence, read N- to C-terminus: Sulfate adenylyltransferase (401 aa).

This sequence belongs to the sulfate adenylyltransferase family.

The enzyme catalyses sulfate + ATP + H(+) = adenosine 5'-phosphosulfate + diphosphate. Its pathway is sulfur metabolism; hydrogen sulfide biosynthesis; sulfite from sulfate: step 1/3. This chain is Sulfate adenylyltransferase, found in Alcanivorax borkumensis (strain ATCC 700651 / DSM 11573 / NCIMB 13689 / SK2).